A 66-amino-acid chain; its full sequence is Potassium channel toxin alpha-KTx (66 aa).

An N-terminal signal peptide occupies residues 1-21; the sequence is MNTKVVLIMLMITSVILVVEA. 4 disulfides stabilise this stretch: Cys-29–Cys-49, Cys-35–Cys-59, Cys-39–Cys-61, and Cys-44–Cys-64.

Belongs to the short scorpion toxin superfamily. Potassium channel inhibitor family. In terms of tissue distribution, expressed by the venom gland.

Its subcellular location is the secreted. Functionally, blocks voltage-gated potassium channels. The sequence is that of Potassium channel toxin alpha-KTx from Hoffmannihadrurus gertschi (Scorpion).